The following is a 435-amino-acid chain: Trigger factor (435 aa).

In terms of domain architecture, PPIase FKBP-type spans 161–246 (GDKLTLDFTG…IHKTEGPILP (86 aa)).

It belongs to the FKBP-type PPIase family. Tig subfamily.

Its subcellular location is the cytoplasm. It catalyses the reaction [protein]-peptidylproline (omega=180) = [protein]-peptidylproline (omega=0). In terms of biological role, involved in protein export. Acts as a chaperone by maintaining the newly synthesized protein in an open conformation. Functions as a peptidyl-prolyl cis-trans isomerase. This chain is Trigger factor, found in Colwellia psychrerythraea (strain 34H / ATCC BAA-681) (Vibrio psychroerythus).